The primary structure comprises 342 residues: UDP-N-acetylglucosamine--N-acetylmuramyl-(pentapeptide) pyrophosphoryl-undecaprenol N-acetylglucosamine transferase (342 aa).

UDP-N-acetyl-alpha-D-glucosamine is bound by residues 10–12, Asn-124, Ser-177, and Gln-275; that span reads TGG.

Belongs to the glycosyltransferase 28 family. MurG subfamily.

The protein resides in the cell inner membrane. It catalyses the reaction di-trans,octa-cis-undecaprenyl diphospho-N-acetyl-alpha-D-muramoyl-L-alanyl-D-glutamyl-meso-2,6-diaminopimeloyl-D-alanyl-D-alanine + UDP-N-acetyl-alpha-D-glucosamine = di-trans,octa-cis-undecaprenyl diphospho-[N-acetyl-alpha-D-glucosaminyl-(1-&gt;4)]-N-acetyl-alpha-D-muramoyl-L-alanyl-D-glutamyl-meso-2,6-diaminopimeloyl-D-alanyl-D-alanine + UDP + H(+). It participates in cell wall biogenesis; peptidoglycan biosynthesis. Functionally, cell wall formation. Catalyzes the transfer of a GlcNAc subunit on undecaprenyl-pyrophosphoryl-MurNAc-pentapeptide (lipid intermediate I) to form undecaprenyl-pyrophosphoryl-MurNAc-(pentapeptide)GlcNAc (lipid intermediate II). The protein is UDP-N-acetylglucosamine--N-acetylmuramyl-(pentapeptide) pyrophosphoryl-undecaprenol N-acetylglucosamine transferase of Campylobacter jejuni subsp. jejuni serotype O:6 (strain 81116 / NCTC 11828).